Reading from the N-terminus, the 1060-residue chain is DNA-directed RNA polymerase subunit beta (1060 aa).

It belongs to the RNA polymerase beta chain family. As to quaternary structure, in plastids the minimal PEP RNA polymerase catalytic core is composed of four subunits: alpha, beta, beta', and beta''. When a (nuclear-encoded) sigma factor is associated with the core the holoenzyme is formed, which can initiate transcription.

It is found in the plastid. It localises to the chloroplast. The enzyme catalyses RNA(n) + a ribonucleoside 5'-triphosphate = RNA(n+1) + diphosphate. In terms of biological role, DNA-dependent RNA polymerase catalyzes the transcription of DNA into RNA using the four ribonucleoside triphosphates as substrates. The sequence is that of DNA-directed RNA polymerase subunit beta from Calycanthus floridus var. glaucus (Eastern sweetshrub).